The following is a 509-amino-acid chain: Maturase K (509 aa).

Belongs to the intron maturase 2 family. MatK subfamily.

It localises to the plastid. Its subcellular location is the chloroplast. In terms of biological role, usually encoded in the trnK tRNA gene intron. Probably assists in splicing its own and other chloroplast group II introns. The chain is Maturase K from Vatairea macrocarpa.